Here is a 150-residue protein sequence, read N- to C-terminus: HTH-type transcriptional regulator LrpA (150 aa).

The HTH asnC-type domain occupies 5–66 (LDDIDRILVR…RINPEAVGHL (62 aa)). A DNA-binding region (H-T-H motif) is located at residues 24–43 (LSELATRAGLSVSAVQSRVR). L-phenylalanine contacts are provided by V100, G102, and E104.

Homohexadecamer in the absence of any added ligand. Homooctamer. Tetramer of dimers. In the presence of phenylalanine, the hexadecamer dissociates into an octamer, which further dissociates partially into lower-order oligomers.

Its activity is regulated as follows. The DNA-binding activity of LrpA is modulated by interaction of LrpA with various effector molecules, including amino acids and vitamins. The DNA binding affinity is decreased by several amino acids, including phenylalanine, tyrosine, tryptophan, histidine, leucine and aspartate. Preferentially binds to aromatic amino acids. Besides amino acids, the binding affinity is also reduced by vitamins, including B1, B3, B6, VC, B7, B9, B12, VA and VK3. Functionally, transcriptional regulator that probably plays an important role in M.tuberculosis persistence. Regulates the expression of several genes, including lat, rsmG, whiB2, lsr2 and Rv2011c. Acts by binding directly to the promoter region of the target genes. The protein is HTH-type transcriptional regulator LrpA of Mycobacterium tuberculosis (strain ATCC 25618 / H37Rv).